Reading from the N-terminus, the 323-residue chain is MGNRAGRSDFEWVYTDQPHTQRRKEMLAKYPAIKALMRPDPYLKWTVTAMVLAQLLACWLAQGLAWRWLFFWAYAFGGCVNHSLTLAIHDISHNTAFGTGRPSRNRWFAIFANLPVGLPYAASFKKYHVDHHRYLGGDGLDVDVPTYFEGRLFCTPARKLLWLALQPFFYTLRPLCVHPKAMTRMELCNTLVQLAADATIYALWGLKPMVYLLASSLLGLGLHPISGHFVAEHYMFLKGHETYSYYGPLNWITFNVGYHMEHHDFPSIPSCNLPLVRKIAPEYYDHLPQHHSWVKVLWDFVFDDSLGPFARVKRVCKLAENRL.

The N-myristoyl glycine moiety is linked to residue Gly-2. Transmembrane regions (helical) follow at residues 45 to 65 and 68 to 88; these read WTVTAMVLAQLLACWLAQGLA and WLFFWAYAFGGCVNHSLTLAI. The Histidine box-1 motif lies at 89-93; sequence HDISH. The required for C4-hydroxylase activity stretch occupies residues 95 to 99; it reads TAFGT. Residues 128–132 carry the Histidine box-2 motif; sequence HVDHH. Residues 209–231 form a helical membrane-spanning segment; sequence MVYLLASSLLGLGLHPISGHFVA. A Histidine box-3 motif is present at residues 259–263; it reads HMEHH.

Belongs to the fatty acid desaturase type 1 family. DEGS subfamily.

It is found in the endoplasmic reticulum membrane. The enzyme catalyses a dihydroceramide + 2 Fe(II)-[cytochrome b5] + O2 + 2 H(+) = a phytoceramide + 2 Fe(III)-[cytochrome b5] + H2O. It catalyses the reaction an N-acylsphinganine + 2 Fe(II)-[cytochrome b5] + O2 + 2 H(+) = an N-acylsphing-4-enine + 2 Fe(III)-[cytochrome b5] + 2 H2O. The catalysed reaction is N-octanoylsphinganine + 2 Fe(II)-[cytochrome b5] + O2 + 2 H(+) = N-octanoyl-4-hydroxysphinganine + 2 Fe(III)-[cytochrome b5] + H2O. It carries out the reaction an N-acylsphinganine + 2 Fe(II)-[cytochrome b5] + O2 + 2 H(+) = an N-acyl-(4R)-4-hydroxysphinganine + 2 Fe(III)-[cytochrome b5] + H2O. The protein operates within membrane lipid metabolism; sphingolipid biosynthesis. Functionally, bifunctional enzyme which acts both as a sphingolipid delta(4)-desaturase and a sphingolipid C4-monooxygenase. The polypeptide is Sphingolipid delta(4)-desaturase/C4-monooxygenase DES2 (Bos taurus (Bovine)).